Reading from the N-terminus, the 311-residue chain is CARD domain-containing protein E10 (311 aa).

One can recognise a CARD domain in the interval 21–110 (IWDVERLCLE…EHLVDLLERA (90 aa)). Disordered regions lie at residues 125–181 (ESGA…GGVY), 203–230 (GAGRGGSLLSGGHGGHPPHGGPGGGGRD), and 243–311 (IPEP…FFCC). Residues 140-152 (EDNSGYTALLPTN) are compositionally biased toward polar residues. Over residues 252–272 (SGGGGRGGGVRYDAGGDGRLG) the composition is skewed to gly residues.

Its subcellular location is the host cell membrane. Activates host NF-kappa-B and JNK pathways. Induces hyperphosphorylation and redistribution of host bcl-10 from the cytoplasm to the plasma membrane. The inhibitory effect of cellular bcl-10 on NF-kappa-B pathway is then overcome allowing NF-kappa-B activation. This is CARD domain-containing protein E10 (E10) from Equus caballus (Horse).